We begin with the raw amino-acid sequence, 576 residues long: Mycobactin import ATP-binding/permease protein IrtB (576 aa).

The Cytoplasmic segment spans residues 1 to 25 (MIRTLIALVPADKRGTLGLYTVLTV). One can recognise an ABC transmembrane type-1 domain in the interval 19 to 299 (LYTVLTVLSV…LSELTPAIES (281 aa)). The helical transmembrane segment at 26–46 (LSVVIRAAGTVLLVPLVAALF) threads the bilayer. The Periplasmic segment spans residues 47–52 (GDTPQD). A helical transmembrane segment spans residues 53 to 73 (AWPWLGWLTAATAAGWIVDTT). The Cytoplasmic segment spans residues 74-131 (TSRLGFDLGFAVLDHTQHDVADRMPNIRLDWLTAENTATARAAIASTGPELVGLVVNL). Transmembrane regions (helical) follow at residues 132–152 (LTPL…LVAV) and 153–173 (SPPL…AMWA). Over 174-241 (SNRLSRKADT…RLLAMQIPGQ (68 aa)) the chain is Cytoplasmic. The chain crosses the membrane as a helical span at residues 242 to 262 (LLFSLASQLALILLAGMATWL). Residues 263 to 267 (TVRGE) lie on the Periplasmic side of the membrane. Residues 268 to 288 (LSVPEAVAMIVVVARYLEPFT) form a helical membrane-spanning segment. At 289 to 576 (SLSELTPAIE…HEAADWQITH (288 aa)) the chain is on the cytoplasmic side. One can recognise an ABC transporter domain in the interval 332–565 (IEFDCVTFGY…GGRFDEFWRR (234 aa)). 364–371 (GPSGSGKS) provides a ligand contact to ATP.

It belongs to the ABC transporter superfamily. Siderophore-Fe(3+) uptake transporter (SIUT) (TC 3.A.1.21) family. Forms a heterodimer with IrtA.

The protein resides in the cell inner membrane. Functionally, part of the ABC transporter complex IrtAB involved in the import of iron-bound mycobactin (Fe-MBT) and carboxymycobactin (Fe-cMBT). Has a preference for Fe-MBT over Fe-cMBT. Transmembrane domains (TMD) form a pore in the membrane and the ATP-binding domain (NBD) is responsible for energy generation. The chain is Mycobactin import ATP-binding/permease protein IrtB from Mycolicibacterium smegmatis (strain ATCC 700084 / mc(2)155) (Mycobacterium smegmatis).